Reading from the N-terminus, the 367-residue chain is MELGCPELLEPPEDIFSTGSFLELGFNGPPSKVPGLQKSESDDFLNLFIDPNMIRCSETSPGSDSGVSEDPGSPAPQAPSSPALYEVVYEAGALQGTQREAGPTFGLISIQIDQWSPAFMVPGACTVSDLPSEAHRHILPRVSTIAPPPPAALLSCQRLFLTDEEKHLLGQEGVTLPSHLPLTKAEERILKKIRRKIRNKQSAQDSRRRKKEYIDGLESRVAACSEQNQKLQRKVQELERQNISLVAQVHQLQKFTAQTSSRAAQTSTCVLILLFSLALIILPSFSPFQSQPEARSEGYQLHGVISRNILTHEDMTESPESPVLKANLEELPQVPATNGSTKMAHLKMRVKARPTGPIRGMVHADEM.

The segment at 1–52 (MELGCPELLEPPEDIFSTGSFLELGFNGPPSKVPGLQKSESDDFLNLFIDPN) is required for transcriptional activation. The Cytoplasmic segment spans residues 1-267 (MELGCPELLE…QTSSRAAQTS (267 aa)). A disordered region spans residues 58 to 81 (ETSPGSDSGVSEDPGSPAPQAPSS). Positions 189 to 252 (ILKKIRRKIR…ISLVAQVHQL (64 aa)) constitute a bZIP domain. The interval 191 to 230 (KKIRRKIRNKQSAQDSRRRKKEYIDGLESRVAACSEQNQK) is basic motif. Residues 231–252 (LQRKVQELERQNISLVAQVHQL) are leucine-zipper. The chain crosses the membrane as a helical; Signal-anchor for type II membrane protein span at residues 268–288 (TCVLILLFSLALIILPSFSPF). Topologically, residues 289–367 (QSQPEARSEG…IRGMVHADEM (79 aa)) are lumenal. A glycan (N-linked (GlcNAc...) asparagine) is linked at N338.

The protein belongs to the bZIP family. ATF subfamily. As to quaternary structure, binds DNA as a dimer. Forms a heterodimer with CREM isoform Delta. Post-translationally, controlled by regulated intramembrane proteolysis (RIP). Following ER stress a fragment containing the cytoplasmic transcription factor domain is released by proteolysis. The cleavage seems to be performed sequentially by site-1 and site-2 proteases (PS1 and PS2). PS1 cleavage may be suppressed by a determinant in the C-terminal region.

The protein resides in the endoplasmic reticulum membrane. It is found in the nucleus. In terms of biological role, transcriptional activator that may play a role in the unfolded protein response. Binds to the UPR element (UPRE) but not to CRE element. Preferentially binds DNA with to the consensus sequence 5'-T[GT]ACGT[GA][GT]-3' and has transcriptional activation activity from UPRE. Binds to NF-kappa-B site and has transcriptional activation activity from NF-kappa-B-containing regulatory elements. Increases the binding of CREM isoform Delta with CRE. The CREM isoform Delta-CREB3L4 heterodimer functions through CRE but not through UPRE and may recruit HIRA to CRE to regulate histone exchange. The chain is Cyclic AMP-responsive element-binding protein 3-like protein 4 (Creb3l4) from Rattus norvegicus (Rat).